Here is a 131-residue protein sequence, read N- to C-terminus: Squamosa promoter-binding protein 1 (131 aa).

A compositionally biased stretch (basic and acidic residues) spans 1-10 (MDTSKGEGKR). The interval 1–52 (MDTSKGEGKRVIKLPGSQEQGEEEDDIGEDSKKTRALTPSGKRASGSTQRSC) is disordered. The segment at 49 to 126 (QRSCQVENCA…AGHNERRRKS (78 aa)) adopts an SBP-type zinc-finger fold. Zn(2+)-binding residues include Cys-52, Cys-57, Cys-74, His-77, Cys-93, Cys-96, His-100, and Cys-112. The Bipartite nuclear localization signal motif lies at 109–125 (KRSCRRRLAGHNERRRK).

The protein resides in the nucleus. Its function is as follows. Probable transcriptional factor. Binds to the promoter of the SQUAMOSA gene. The protein is Squamosa promoter-binding protein 1 (SBP1) of Antirrhinum majus (Garden snapdragon).